Reading from the N-terminus, the 855-residue chain is Sucrose synthase 7 (855 aa).

The segment at 279–758 is GT-B glycosyltransferase; it reads SIFNIVIFSI…GLQRIYECYT (480 aa).

The protein belongs to the glycosyltransferase 1 family. Plant sucrose synthase subfamily. As to expression, predominantly expressed in roots, flowers and immature seeds.

It is found in the cytoplasm. It localises to the membrane. The enzyme catalyses an NDP-alpha-D-glucose + D-fructose = a ribonucleoside 5'-diphosphate + sucrose + H(+). Its function is as follows. Sucrose-cleaving enzyme that provides UDP-glucose and fructose for various metabolic pathways. This chain is Sucrose synthase 7 (SUS7), found in Oryza sativa subsp. japonica (Rice).